The sequence spans 376 residues: Ribonucleoside-diphosphate reductase subunit beta (376 aa).

Fe cation is bound by residues Asp85, Glu116, and His119. The active site involves Tyr123. 3 residues coordinate Fe cation: Glu205, Glu239, and His242.

The protein belongs to the ribonucleoside diphosphate reductase small chain family. Tetramer of two alpha and two beta subunits. Requires Fe cation as cofactor.

The catalysed reaction is a 2'-deoxyribonucleoside 5'-diphosphate + [thioredoxin]-disulfide + H2O = a ribonucleoside 5'-diphosphate + [thioredoxin]-dithiol. In terms of biological role, provides the precursors necessary for DNA synthesis. Catalyzes the biosynthesis of deoxyribonucleotides from the corresponding ribonucleotides. The chain is Ribonucleoside-diphosphate reductase subunit beta (nrdB) from Haemophilus influenzae (strain ATCC 51907 / DSM 11121 / KW20 / Rd).